The following is a 210-amino-acid chain: Probable GTP-binding protein EngB (210 aa).

One can recognise an EngB-type G domain in the interval 22-198 (FLPEYAFIGR…LTYIDEVNQE (177 aa)). GTP-binding positions include 30–37 (GRSNVGKS), 57–61 (GKTQL), 75–78 (DLPG), 142–145 (TKAD), and 177–179 (TSS). 2 residues coordinate Mg(2+): serine 37 and threonine 59.

Belongs to the TRAFAC class TrmE-Era-EngA-EngB-Septin-like GTPase superfamily. EngB GTPase family. Mg(2+) is required as a cofactor.

In terms of biological role, necessary for normal cell division and for the maintenance of normal septation. This is Probable GTP-binding protein EngB from Flavobacterium johnsoniae (strain ATCC 17061 / DSM 2064 / JCM 8514 / BCRC 14874 / CCUG 350202 / NBRC 14942 / NCIMB 11054 / UW101) (Cytophaga johnsonae).